The primary structure comprises 2621 residues: Nonribosomal peptide synthetase dtpA (2621 aa).

Residues 446 to 844 (CMEQPNAEAI…GRKDQQVKIR (399 aa)) form an adenylation 1 region. The Carrier 1 domain maps to 978-1054 (QPYTQVEETL…EVALYSRALS (77 aa)). O-(pantetheine 4'-phosphoryl)serine is present on Ser-1015. Positions 1095-1506 (EDIYPCTALQ…LNQLELAGPQ (412 aa)) are condensation 1. Residues 1534-1930 (SRTQPGASAI…GRRDNQVKLR (397 aa)) are adenylation 2. The Carrier 2 domain occupies 2071-2147 (QPSTTQEALV…LFCTNASTSI (77 aa)). Ser-2108 bears the O-(pantetheine 4'-phosphoryl)serine mark. The condensation 2 stretch occupies residues 2220-2618 (AIFKLHGSKV…HSARPIASID (399 aa)).

It belongs to the NRP synthetase family.

Its pathway is alkaloid biosynthesis. In terms of biological role, nonribosomal peptide synthetase; part of the gene cluster that mediates the biosynthesis of the dimeric diketopiperazine alkaloid ditryptophenaline. The nonribosomal peptide synthase dtpA accepts L-tryptophan and L-phenylalanine as its substrates and forms the phenylalanyl-tryptophanyl cyclic dipeptide product cyclophenylalanyltryptophenyl. The N-methyltransferase dtpB is responsible for the N-methylation of cyclophenylalanyltryptophenyl to yield cyclo-N-methylphenylalanyltryptophenyl. The cytochrome P450 monooxygenase is responsible not only for pyrroloindole ring formation but also for concurrent dimerization of N-methylphenylalanyltryptophanyl diketopiperazine monomers into a homodimeric product. This chain is Nonribosomal peptide synthetase dtpA, found in Aspergillus flavus (strain ATCC 200026 / FGSC A1120 / IAM 13836 / NRRL 3357 / JCM 12722 / SRRC 167).